Here is a 226-residue protein sequence, read N- to C-terminus: UPF0758 protein gbs1168 (226 aa).

Positions 103–225 constitute an MPN domain; sequence QILSSEQLAR…YYSFREEADI (123 aa). The Zn(2+) site is built by H174, H176, and D187. Positions 174–187 match the JAMM motif motif; sequence HNHPSGSPNPSESD.

The protein belongs to the UPF0758 family.

In Streptococcus agalactiae serotype III (strain NEM316), this protein is UPF0758 protein gbs1168.